We begin with the raw amino-acid sequence, 179 residues long: Large ribosomal subunit protein uL5 (179 aa).

It belongs to the universal ribosomal protein uL5 family. Part of the 50S ribosomal subunit; part of the 5S rRNA/L5/L18/L25 subcomplex. Contacts the 5S rRNA and the P site tRNA. Forms a bridge to the 30S subunit in the 70S ribosome.

This is one of the proteins that bind and probably mediate the attachment of the 5S RNA into the large ribosomal subunit, where it forms part of the central protuberance. In the 70S ribosome it contacts protein S13 of the 30S subunit (bridge B1b), connecting the 2 subunits; this bridge is implicated in subunit movement. Contacts the P site tRNA; the 5S rRNA and some of its associated proteins might help stabilize positioning of ribosome-bound tRNAs. The chain is Large ribosomal subunit protein uL5 from Mannheimia succiniciproducens (strain KCTC 0769BP / MBEL55E).